The following is an 820-amino-acid chain: MNISYNWLKEYVNFDLTPDEVAAALTSIGLETGGVEEVQTIKGGLEGLVIGEVLTCVEHPNSDHLHITTVNLGNGEPTQIVCGAPNVAAGQKVVVATLGTKLYDGDECFTIKKSKIRGVESIGMICAEDEIGIGTSHDGIIVLPEDAVPGTLAKDYYNVKSDYVLEVDITPNRADACSHYGVARDLYAYLVQNGKQAALTRPSVDAFAVENHDLDIKVTVENSEACPRYAGVTVKGVTVKESPEWLQNKLRIIGLRPINNVVDITNYIVHAFGQPLHCFDANKIKGGEVIVKTMPEGTTFVTLDGVERKLNERDLMICNKEDAMCIAGVFGGLDSGSTEATTDVFLESAYFHPTWVRKTARRHGLNTDASFRFERGIDPNITIYCLKLAAMMVKELAGGTISSEIKDVCAAPAQDFIVELTYEKVHSLIGKVIPVETIKSIVTSLEMKIMDETAEGLTLAVPPYRVDVQRDCDVIEDILRIYGYNNVEIPSTLKSSLTTKGDCDKSNKLQNLVAEQLVGCGFNEILNNSLTRAAYYDGLESYPSKNLVMLLNPLSADLNCMRQTLLFGGLESIAHNANRKNADLKFFEFGNCYHFDAEKKNPEKVLAPYSEDYHLGLWVTGKMVSNSWAHADENTSVYELKAYVENIFKRLGLDLHSLVVGNLSDDIYSTALTVNTKGGKRLATFGVVTKKMLKAFDVDNEVYYADLNWKELMKAIRSVKVSYKEISKFPAVKRDLALLLDKKVQFAEIEKIAYETEKKLLKEVSLFDVYEGKNLEAGKKSYAVSFLLQDESQTLNDKMIDKIMSKLVKNLEDKLGAKLR.

One can recognise a tRNA-binding domain in the interval K42–K154. The 77-residue stretch at A413–I489 folds into the B5 domain. Mg(2+)-binding residues include D467, D473, E476, and D477. One can recognise an FDX-ACB domain in the interval S727–R820.

Belongs to the phenylalanyl-tRNA synthetase beta subunit family. Type 1 subfamily. As to quaternary structure, tetramer of two alpha and two beta subunits. The cofactor is Mg(2+).

It is found in the cytoplasm. It catalyses the reaction tRNA(Phe) + L-phenylalanine + ATP = L-phenylalanyl-tRNA(Phe) + AMP + diphosphate + H(+). This Bacteroides fragilis (strain ATCC 25285 / DSM 2151 / CCUG 4856 / JCM 11019 / LMG 10263 / NCTC 9343 / Onslow / VPI 2553 / EN-2) protein is Phenylalanine--tRNA ligase beta subunit.